We begin with the raw amino-acid sequence, 474 residues long: Glutamate--tRNA ligase 1 (474 aa).

A 'HIGH' region motif is present at residues 11 to 21 (PSPTGYLHIGG). The 'KMSKS' region signature appears at 240 to 244 (KLSKR). An ATP-binding site is contributed by K243.

It belongs to the class-I aminoacyl-tRNA synthetase family. Glutamate--tRNA ligase type 1 subfamily. Monomer.

Its subcellular location is the cytoplasm. The catalysed reaction is tRNA(Glu) + L-glutamate + ATP = L-glutamyl-tRNA(Glu) + AMP + diphosphate. Functionally, catalyzes the attachment of glutamate to tRNA(Glu) in a two-step reaction: glutamate is first activated by ATP to form Glu-AMP and then transferred to the acceptor end of tRNA(Glu). The chain is Glutamate--tRNA ligase 1 from Mesorhizobium japonicum (strain LMG 29417 / CECT 9101 / MAFF 303099) (Mesorhizobium loti (strain MAFF 303099)).